We begin with the raw amino-acid sequence, 211 residues long: 2,3-bisphosphoglycerate-dependent phosphoglycerate mutase (211 aa).

Substrate contacts are provided by residues 9 to 16, 22 to 23, Arg61, 88 to 91, Lys99, 115 to 116, and 159 to 160; these read RHGQSDWN, TG, ERDY, RR, and GN. His10 serves as the catalytic Tele-phosphohistidine intermediate. Residue Glu88 is the Proton donor/acceptor of the active site.

This sequence belongs to the phosphoglycerate mutase family. BPG-dependent PGAM subfamily. Homodimer.

It catalyses the reaction (2R)-2-phosphoglycerate = (2R)-3-phosphoglycerate. It participates in carbohydrate degradation; glycolysis; pyruvate from D-glyceraldehyde 3-phosphate: step 3/5. Catalyzes the interconversion of 2-phosphoglycerate and 3-phosphoglycerate. The chain is 2,3-bisphosphoglycerate-dependent phosphoglycerate mutase from Allorhizobium ampelinum (strain ATCC BAA-846 / DSM 112012 / S4) (Agrobacterium vitis (strain S4)).